The primary structure comprises 791 residues: Interleukin-17 receptor C (791 aa).

A signal peptide spans 1-20 (MPVPWFLLSLALGRSPVVLS). The Extracellular segment spans residues 21-538 (LERLVGPQDA…CPMDKYIHKR (518 aa)). N-linked (GlcNAc...) asparagine glycosylation is found at N189 and N257. C265 and C277 are joined by a disulfide. N-linked (GlcNAc...) asparagine glycans are attached at residues N284, N297, N324, and N334. Intrachain disulfides connect C341-C391, C343-C359, and C400-C409. Residues N420, N443, and N477 are each glycosylated (N-linked (GlcNAc...) asparagine). C439 and C453 are disulfide-bonded. 2 disulfides stabilise this stretch: C481/C488 and C515/C529. A helical transmembrane segment spans residues 539–559 (WALVWLACLLFAAALSLILLL). Topologically, residues 560 to 791 (KKDHAKGWLR…GAGPGAGDGT (232 aa)) are cytoplasmic. Residues 583-735 (GRAALLLYSA…LPSQLPDFLG (153 aa)) enclose the SEFIR domain. Positions 762-791 (ALDSYFHPPGTPAPGRGVGPGAGPGAGDGT) are disordered. The span at 777 to 791 (RGVGPGAGPGAGDGT) shows a compositional bias: gly residues.

As to quaternary structure, homodimer; disulfide-linked. Heterodimer with IL17RA. Heterodimerization with IL17RA is independent of the cytoplasmic tail. Associates with non-glycosylated IL17RA constitutively. Binding of IL17A and IL17F induces association with glycosylated IL17RA. Forms complexes with 2:1 binding stoichiometry: two receptor chains for one interleukin molecule. IL17A homodimer preferentially drives the formation of IL17RA-IL17RC heterodimeric receptor complex, whereas IL17F homodimer forms predominantly complexes with IL17RC homodimer. IL17A-IL17F forms complexes with IL17RA-IL17RC, but with lower affinity when compared to IL17A homodimer. IL17RC chain cannot distinguish between IL17A and IL17F molecules, potentially enabling the formation of topologically distinct complexes. Interacts (through SEFIR domain and extended downstream region) with TRAF3IP2/ACT1 (phosphorylated). In terms of tissue distribution, expressed in prostate, skeletal muscle, kidney and placenta (at protein level). Expressed in brain, cartilage, colon, heart, intestine, kidney, liver, lung, muscle, placenta, and prostate. Also detected in thyroid, trachea and adrenal gland. Low expression in thymus and leukocytes.

It is found in the cell membrane. In terms of biological role, receptor for IL17A and IL17F, major effector cytokines of innate and adaptive immune system involved in antimicrobial host defense and maintenance of tissue integrity. Receptor for IL17A and IL17F, major effector cytokines of innate and adaptive immune system involved in antimicrobial host defense and maintenance of tissue integrity. Receptor for IL17A and IL17F homodimers as part of a heterodimeric complex with IL17RA. Receptor for the heterodimer formed by IL17A and IL17B as part of a heterodimeric complex with IL17RA. Has also been shown to be the cognate receptor for IL17F and to bind IL17A with high affinity without the need for IL17RA. Upon binding of IL17F homodimer triggers downstream activation of TRAF6 and NF-kappa-B signaling pathway. Induces transcriptional activation of IL33, a potent cytokine that stimulates group 2 innate lymphoid cells and adaptive T-helper 2 cells involved in pulmonary allergic response to fungi. Promotes sympathetic innervation of peripheral organs by coordinating the communication between gamma-delta T cells and parenchymal cells. Stimulates sympathetic innervation of thermogenic adipose tissue by driving TGFB1 expression. Binding of IL17A-IL17F to IL17RA-IL17RC heterodimeric receptor complex triggers homotypic interaction of IL17RA and IL17RC chains with TRAF3IP2 adapter through SEFIR domains. This leads to downstream TRAF6-mediated activation of NF-kappa-B and MAPkinase pathways ultimately resulting in transcriptional activation of cytokines, chemokines, antimicrobial peptides and matrix metalloproteinases, with potential strong immune inflammation. Primarily induces neutrophil activation and recruitment at infection and inflammatory sites. Stimulates the production of antimicrobial beta-defensins DEFB1, DEFB103A, and DEFB104A by mucosal epithelial cells, limiting the entry of microbes through the epithelial barriers. Receptor for both IL17A and IL17F. Its function is as follows. Does not bind IL17A or IL17F. In Homo sapiens (Human), this protein is Interleukin-17 receptor C (IL17RC).